The sequence spans 294 residues: NAD kinase (294 aa).

Catalysis depends on D74, which acts as the Proton acceptor. Residues 74–75 (DG), 148–149 (NE), H159, R176, D178, 189–194 (TAYSLS), and Q249 contribute to the NAD(+) site.

The protein belongs to the NAD kinase family. A divalent metal cation is required as a cofactor.

It localises to the cytoplasm. It carries out the reaction NAD(+) + ATP = ADP + NADP(+) + H(+). Functionally, involved in the regulation of the intracellular balance of NAD and NADP, and is a key enzyme in the biosynthesis of NADP. Catalyzes specifically the phosphorylation on 2'-hydroxyl of the adenosine moiety of NAD to yield NADP. This Vibrio campbellii (strain ATCC BAA-1116) protein is NAD kinase.